A 315-amino-acid chain; its full sequence is Dihydroorotate dehydrogenase (fumarate) (315 aa).

Residues Lys-46, 70–74, and Asn-130 each bind substrate; that span reads NSMGL. An FMN-binding site is contributed by 46 to 47; it reads KS. Position 130 (Asn-130) interacts with FMN. The active-site Nucleophile is Cys-133. 2 residues coordinate FMN: Lys-167 and Ile-195. Residue 196-197 coordinates substrate; that stretch reads NS. FMN is bound by residues Gly-224, 252-253, and 274-275; these read GG and GT.

The protein belongs to the dihydroorotate dehydrogenase family. Type 1 subfamily. Homodimer. FMN serves as cofactor.

The protein localises to the cytoplasm. It carries out the reaction (S)-dihydroorotate + fumarate = orotate + succinate. Its pathway is pyrimidine metabolism; UMP biosynthesis via de novo pathway. In terms of biological role, catalyzes the conversion of dihydroorotate to orotate with fumarate as the electron acceptor. The sequence is that of Dihydroorotate dehydrogenase (fumarate) (URA1) from Kluyveromyces lactis (strain ATCC 8585 / CBS 2359 / DSM 70799 / NBRC 1267 / NRRL Y-1140 / WM37) (Yeast).